A 372-amino-acid polypeptide reads, in one-letter code: Queuine tRNA-ribosyltransferase (372 aa).

D90 serves as the catalytic Proton acceptor. Residues D90–F94, D144, Q193, and G220 contribute to the substrate site. The interval G251–D257 is RNA binding. D270 serves as the catalytic Nucleophile. Residues T275–R279 are RNA binding; important for wobble base 34 recognition. Residues C308, C310, C313, and H339 each coordinate Zn(2+).

The protein belongs to the queuine tRNA-ribosyltransferase family. As to quaternary structure, homodimer. Within each dimer, one monomer is responsible for RNA recognition and catalysis, while the other monomer binds to the replacement base PreQ1. Zn(2+) is required as a cofactor.

It catalyses the reaction 7-aminomethyl-7-carbaguanine + guanosine(34) in tRNA = 7-aminomethyl-7-carbaguanosine(34) in tRNA + guanine. It functions in the pathway tRNA modification; tRNA-queuosine biosynthesis. Functionally, catalyzes the base-exchange of a guanine (G) residue with the queuine precursor 7-aminomethyl-7-deazaguanine (PreQ1) at position 34 (anticodon wobble position) in tRNAs with GU(N) anticodons (tRNA-Asp, -Asn, -His and -Tyr). Catalysis occurs through a double-displacement mechanism. The nucleophile active site attacks the C1' of nucleotide 34 to detach the guanine base from the RNA, forming a covalent enzyme-RNA intermediate. The proton acceptor active site deprotonates the incoming PreQ1, allowing a nucleophilic attack on the C1' of the ribose to form the product. After dissociation, two additional enzymatic reactions on the tRNA convert PreQ1 to queuine (Q), resulting in the hypermodified nucleoside queuosine (7-(((4,5-cis-dihydroxy-2-cyclopenten-1-yl)amino)methyl)-7-deazaguanosine). The polypeptide is Queuine tRNA-ribosyltransferase (Campylobacter hominis (strain ATCC BAA-381 / DSM 21671 / CCUG 45161 / LMG 19568 / NCTC 13146 / CH001A)).